Here is a 108-residue protein sequence, read N- to C-terminus: uncharacterized protein (108 aa).

A disordered region spans residues 74–108 (TGSKKRDSKANSRSRPSGTITSRGARIGLQGYKSH). Over residues 84–95 (NSRSRPSGTITS) the composition is skewed to polar residues.

This is an uncharacterized protein from Saccharomyces cerevisiae (strain ATCC 204508 / S288c) (Baker's yeast).